A 588-amino-acid polypeptide reads, in one-letter code: 2-succinyl-5-enolpyruvyl-6-hydroxy-3-cyclohexene-1-carboxylate synthase (588 aa).

This sequence belongs to the TPP enzyme family. MenD subfamily. Homodimer. Mg(2+) serves as cofactor. Requires Mn(2+) as cofactor. The cofactor is thiamine diphosphate.

It catalyses the reaction isochorismate + 2-oxoglutarate + H(+) = 5-enolpyruvoyl-6-hydroxy-2-succinyl-cyclohex-3-ene-1-carboxylate + CO2. It functions in the pathway quinol/quinone metabolism; 1,4-dihydroxy-2-naphthoate biosynthesis; 1,4-dihydroxy-2-naphthoate from chorismate: step 2/7. Its pathway is cofactor biosynthesis; phylloquinone biosynthesis. In terms of biological role, catalyzes the thiamine diphosphate-dependent decarboxylation of 2-oxoglutarate and the subsequent addition of the resulting succinic semialdehyde-thiamine pyrophosphate anion to isochorismate to yield 2-succinyl-5-enolpyruvyl-6-hydroxy-3-cyclohexene-1-carboxylate (SEPHCHC). The sequence is that of 2-succinyl-5-enolpyruvyl-6-hydroxy-3-cyclohexene-1-carboxylate synthase from Prochlorococcus marinus (strain MIT 9515).